Here is a 390-residue protein sequence, read N- to C-terminus: Nuclear receptor subfamily 2 group F member 6 (390 aa).

The span at 1–15 (MAMVTGGWGDPGGDT) shows a compositional bias: gly residues. The interval 1–50 (MAMVTGGWGDPGGDTNGVDKAGGSYPRATEDDSASPPGATSDAEPGDEER) is disordered. A phosphoserine mark is found at serine 35 and serine 41. Positions 54-129 (QVDCVVCGDK…VGMRKEAVQR (76 aa)) form a DNA-binding region, nuclear receptor. Residues 57-77 (CVVCGDKSSGKHYGVFTCEGC) form an NR C4-type zinc finger. Serine 84 carries the post-translational modification Phosphoserine. The NR C4-type zinc finger occupies 93–117 (CRSNRDCQIDQHHRNQCQYCRLKKC). The NR LBD domain maps to 157-380 (PVSELIAQLL…TLIRDMLLSG (224 aa)). The tract at residues 314–390 (LQEKAQVALT…STFNWPYGSG (77 aa)) is important for dimerization.

It belongs to the nuclear hormone receptor family. NR2 subfamily. Binds DNA as dimer; homodimer and heterodimer with NR2F2 and probably NR2F1. Interacts with THRB.

It localises to the nucleus. Its function is as follows. Transcription factor predominantly involved in transcriptional repression. Binds to promoter/enhancer response elements that contain the imperfect 5'-AGGTCA-3' direct or inverted repeats with various spacings which are also recognized by other nuclear hormone receptors. Involved in modulation of hormonal responses. Represses transcriptional activity of the lutropin-choriogonadotropic hormone receptor/LHCGR gene, the renin/REN gene and the oxytocin-neurophysin/OXT gene. Represses the triiodothyronine-dependent and -independent transcriptional activity of the thyroid hormone receptor gene in a cell type-specific manner. The corepressing function towards thyroid hormone receptor beta/THRB involves at least in part the inhibition of THRB binding to triiodothyronine response elements (TREs) by NR2F6. Inhibits NFATC transcription factor DNA binding and subsequently its transcriptional activity. Acts as transcriptional repressor of IL-17 expression in Th-17 differentiated CD4(+) T cells and may be involved in induction and/or maintenance of peripheral immunological tolerance and autoimmunity. Involved in development of forebrain circadian clock; is required early in the development of the locus coeruleus (LC). This Mus musculus (Mouse) protein is Nuclear receptor subfamily 2 group F member 6 (Nr2f6).